The chain runs to 332 residues: Long form salivary protein D7L1 (332 aa).

Positions 1–21 are cleaved as a signal peptide; the sequence is MHSPKSFLLLAVVFVALRVTA. 2 disulfide bridges follow: C40/C77 and C73/C133. W61 contacts leukotriene E4. K176 contacts leukotriene E4. 3 disulfides stabilise this stretch: C184-C219, C200-C331, and C259-C278. Noradrenaline-binding residues include E185 and R203. 2 residues coordinate noradrenaline: D294 and E297.

Belongs to the PBP/GOBP family. In terms of tissue distribution, female mosquito salivary gland (at protein level).

It is found in the secreted. Functionally, modulates blood feeding of female mosquitoes on vertebrate species by binding and sequestering different mediators involved in the host response, such as biogenic amines and eicosanoids. Binds dopamine, serotonin, histamine, tryptamine, adrenaline, noradrenaline, leukotriene B4, leukotriene C4, leukotriene D4, leukotriene E4 and U-46619, a stable analog of thromboxane A2. Inhibits platelet aggregation induced by serotonin and low doses of thromboxane A2 analog U-46619 but not by high doses of U-46619, collagen or ADP. Prevents leukocyte recruitment. The chain is Long form salivary protein D7L1 from Aedes albopictus (Asian tiger mosquito).